Here is a 444-residue protein sequence, read N- to C-terminus: Transcriptional coactivator nsrH (444 aa).

Positions Ala-74 to Leu-144 constitute an HTH iclR-type domain. The segment at residues Ile-104–Arg-123 is a DNA-binding region (H-T-H motif).

The protein resides in the nucleus. Functionally, transcriptional coactivator; part of the gene cluster that mediates the biosynthesis of the tetrahydroxanthone dimer neosartorin, which exhibits antibacterial activity. This chain is Transcriptional coactivator nsrH, found in Aspergillus novofumigatus (strain IBT 16806).